The following is a 260-amino-acid chain: Ribonuclease HII (260 aa).

One can recognise an RNase H type-2 domain in the interval 73–260 (LHIAGIDEAG…APVQQQLDIV (188 aa)). 3 residues coordinate a divalent metal cation: aspartate 79, glutamate 80, and aspartate 171.

Belongs to the RNase HII family. Requires Mn(2+) as cofactor. It depends on Mg(2+) as a cofactor.

The protein localises to the cytoplasm. The enzyme catalyses Endonucleolytic cleavage to 5'-phosphomonoester.. Functionally, endonuclease that specifically degrades the RNA of RNA-DNA hybrids. The polypeptide is Ribonuclease HII (Desulfitobacterium hafniense (strain DSM 10664 / DCB-2)).